A 174-amino-acid polypeptide reads, in one-letter code: Crossover junction endodeoxyribonuclease RuvC (174 aa).

Active-site residues include D8, E68, and D140. Residues D8, E68, and D140 each coordinate Mg(2+).

The protein belongs to the RuvC family. Homodimer which binds Holliday junction (HJ) DNA. The HJ becomes 2-fold symmetrical on binding to RuvC with unstacked arms; it has a different conformation from HJ DNA in complex with RuvA. In the full resolvosome a probable DNA-RuvA(4)-RuvB(12)-RuvC(2) complex forms which resolves the HJ. Mg(2+) is required as a cofactor.

It is found in the cytoplasm. The enzyme catalyses Endonucleolytic cleavage at a junction such as a reciprocal single-stranded crossover between two homologous DNA duplexes (Holliday junction).. The RuvA-RuvB-RuvC complex processes Holliday junction (HJ) DNA during genetic recombination and DNA repair. Endonuclease that resolves HJ intermediates. Cleaves cruciform DNA by making single-stranded nicks across the HJ at symmetrical positions within the homologous arms, yielding a 5'-phosphate and a 3'-hydroxyl group; requires a central core of homology in the junction. The consensus cleavage sequence is 5'-(A/T)TT(C/G)-3'. Cleavage occurs on the 3'-side of the TT dinucleotide at the point of strand exchange. HJ branch migration catalyzed by RuvA-RuvB allows RuvC to scan DNA until it finds its consensus sequence, where it cleaves and resolves the cruciform DNA. The chain is Crossover junction endodeoxyribonuclease RuvC from Legionella pneumophila (strain Paris).